Reading from the N-terminus, the 267-residue chain is 2-keto-3-deoxy-L-rhamnonate aldolase (267 aa).

Catalysis depends on His-49, which acts as the Proton acceptor. Gln-151 is a substrate binding site. Glu-153 is a Mg(2+) binding site. Ala-178 and Asp-179 together coordinate substrate. Asp-179 is a Mg(2+) binding site.

Belongs to the HpcH/HpaI aldolase family. KDR aldolase subfamily. As to quaternary structure, homohexamer. Requires Mg(2+) as cofactor.

It carries out the reaction 2-dehydro-3-deoxy-L-rhamnonate = (S)-lactaldehyde + pyruvate. Functionally, catalyzes the reversible retro-aldol cleavage of 2-keto-3-deoxy-L-rhamnonate (KDR) to pyruvate and lactaldehyde. In Shigella sonnei (strain Ss046), this protein is 2-keto-3-deoxy-L-rhamnonate aldolase.